A 481-amino-acid chain; its full sequence is Aspartyl/glutamyl-tRNA(Asn/Gln) amidotransferase subunit B (481 aa).

Belongs to the GatB/GatE family. GatB subfamily. As to quaternary structure, heterotrimer of A, B and C subunits.

It catalyses the reaction L-glutamyl-tRNA(Gln) + L-glutamine + ATP + H2O = L-glutaminyl-tRNA(Gln) + L-glutamate + ADP + phosphate + H(+). It carries out the reaction L-aspartyl-tRNA(Asn) + L-glutamine + ATP + H2O = L-asparaginyl-tRNA(Asn) + L-glutamate + ADP + phosphate + 2 H(+). In terms of biological role, allows the formation of correctly charged Asn-tRNA(Asn) or Gln-tRNA(Gln) through the transamidation of misacylated Asp-tRNA(Asn) or Glu-tRNA(Gln) in organisms which lack either or both of asparaginyl-tRNA or glutaminyl-tRNA synthetases. The reaction takes place in the presence of glutamine and ATP through an activated phospho-Asp-tRNA(Asn) or phospho-Glu-tRNA(Gln). This chain is Aspartyl/glutamyl-tRNA(Asn/Gln) amidotransferase subunit B, found in Pseudomonas putida (strain ATCC 700007 / DSM 6899 / JCM 31910 / BCRC 17059 / LMG 24140 / F1).